We begin with the raw amino-acid sequence, 624 residues long: MDEQHSLRIAALAGEILTRDRAQVNTIIHSPERALGQKLDAITALVDSMQPGTPRDAAVNEAANVTAQSPMSETQDPQRANDNVSDTVANENAQNLLLEGQDRVLRHRVLQIAVTFLQRNKRVKANATTLAQIEEALRNYETAKNSGASDSVIDGFLERAESLFNTLKNISLSELLDRESAVFADTESAPRTQTADNSPPPVSEQDFDRLDISQLTDYIENNYRDQFDFDKHNSVEDVRNFAKNLWRNKTRVTSTPLQEYQMPPQTPAPLQDQMPPQTPAYATPAQQPSQPTPAQTPAQQPSQPTPAYVTSAQTPAQQPSQPTPVSNYSWERRVASMFANTDLPQNVPLPDSYDTSSVIGQKRRKRRAPPLPPYSSDEEDAAPPRSPKRKESLSSSEEDEFDYEREQKRRREEDKNFLRLKALELSKYAGVNERMEKIVRVTKAMQQTYDYCNCKNTISGTPAAASFINLLRRLNTYNLSHVEMTVNFYELLYPLTLYNDESNRIVGYIFAATNYFQNCAKNFGRMRAEFNEHGPFAQIDSLVMFVIKFNFLCDLQTFFGKIDGLPMLAQPNIKTHTVLVMRDKIVKLAFGALQYDTSLKTDNRRDPKHLQRLIQLMNADFNIM.

Disordered stretches follow at residues 183 to 208 (FADT…QDFD), 254 to 326 (STPL…TPVS), and 341 to 410 (TDLP…QKRR). One copy of the A-1 repeat lies at 256-268 (PLQEYQMPPQTPA). The 2 X 13 AA tandem repeats, motif A stretch occupies residues 256-280 (PLQEYQMPPQTPAPLQDQMPPQTPA). Residues 269–280 (PLQDQMPPQTPA) form an A-2 repeat. Residues 279-324 (PAYATPAQQPSQPTPAQTPAQQPSQPTPAYVTSAQTPAQQPSQPTP) are compositionally biased toward low complexity. A B-1 repeat occupies 283-293 (TPAQQPSQPTP). The tract at residues 283–324 (TPAQQPSQPTPAQTPAQQPSQPTPAYVTSAQTPAQQPSQPTP) is 3 X 11 AA repeats, motif B. The B-2 repeat unit spans residues 296 to 306 (TPAQQPSQPTP). The stretch at 314 to 324 (TPAQQPSQPTP) is one B-3 repeat.

It is found in the virion. The chain is Capsid protein p87 (P87) from Orgyia pseudotsugata multicapsid polyhedrosis virus (OpMNPV).